We begin with the raw amino-acid sequence, 434 residues long: Protein phosphatase 2C 56 (434 aa).

The PPM-type phosphatase domain occupies 128–422 (LYGFTSICGR…DNISVVVVDL (295 aa)). The Mg(2+) site is built by Asp177, Asp261, Ser262, Asp347, and Asp413. Positions 423 to 427 (KPRRK) match the Nuclear localization signal motif.

The protein belongs to the PP2C family. Interacts with SPK1, ATHB-6, CIPK15/PKS3, GPX3, SRK2E/OST1, SRK2D, SRK2I, SCAR1, SCAR2, SCAR3 and SCARL. Binds to the PA released by the phospholipase D alpha 1 (PLDALPHA1) in response to ABA during the stomatal closure regulation. Interacts with ABA-bounded PYR1, PYL1, PYL2, PYL3, PYL4, PYL5, PYL6, PYL7, PYL8, PYL9, PYL10, and with free PYL2, PYL3, PYL4 and PYL13. Binds to RPL12B, CPK21 and CPK23. Binds to MAPKKK18. Interacts with KIN10. Interacts with phosphorylated PYL8/RCAR3. It depends on Mg(2+) as a cofactor. Mn(2+) serves as cofactor. Expressed in seeds and seedlings. In roots, confined to lateral root caps and columella cells.

It localises to the nucleus. It is found in the cytoplasm. The protein resides in the cell membrane. It catalyses the reaction O-phospho-L-seryl-[protein] + H2O = L-seryl-[protein] + phosphate. The enzyme catalyses O-phospho-L-threonyl-[protein] + H2O = L-threonyl-[protein] + phosphate. Phosphatase activity repressed by oxidized GPX3 and phosphatidic acid (PA). PA is produced by PLD alpha 1 in response to ABA. Repressed by PYR/PYL/RCAR ABA receptors in an ABA-dependent manner. Its function is as follows. Key component and repressor of the abscisic acid (ABA) signaling pathway that regulates numerous ABA responses, such as stomatal closure, osmotic water permeability of the plasma membrane (Pos), drought-induced resistance and rhizogenesis, response to glucose, high light stress, seed germination and inhibition of vegetative growth. During the stomatal closure regulation, modulates the inward calcium-channel permeability as well as the actin reorganization in guard cells in response to ABA. Involved in the resistance to the bacterial pathogen Pseudomonas syringae pv. tomato. Controls negatively fibrillin expression that is involved in mediating ABA-induced photoprotection. May be involved in ABA content regulation. Plays a role in the Pro accumulation in response to reduced water availability (low water potential). Required for the ABA negative regulation of the ethylene-induced hyponastic growth. Involved in acquired thermotolerance of root growth and seedling survival. Activates/represses SRK2E/OST1 in response to ABA-dependent stimuli, especially in stomata closure regulation involving SLAC1. Represses MAPKKK18 activity and promotes MAPKKK18 degradation by the proteasome pathway upon abscisic acid (ABA) treatment. Represses KIN10 activity by the specific dephosphorylation of its T-loop Thr-198, leading to a poststress inactivation of SnRK1 signaling. Restricts MAPKKK20 activity by dephosphorylation. In Arabidopsis thaliana (Mouse-ear cress), this protein is Protein phosphatase 2C 56.